Here is a 399-residue protein sequence, read N- to C-terminus: Elongation factor Tu (399 aa).

The tr-type G domain maps to 10 to 209 (KPHVNVGTIG…EVDKYIPTPQ (200 aa)). The interval 19 to 26 (GHVDHGKT) is G1. A GTP-binding site is contributed by 19–26 (GHVDHGKT). T26 provides a ligand contact to Mg(2+). The interval 60 to 64 (GITIA) is G2. Residues 81 to 84 (DCPG) form a G3 region. Residues 81–85 (DCPGH) and 136–139 (NKQD) each bind GTP. The segment at 136-139 (NKQD) is G4. The segment at 174-176 (SAL) is G5.

Belongs to the TRAFAC class translation factor GTPase superfamily. Classic translation factor GTPase family. EF-Tu/EF-1A subfamily. In terms of assembly, monomer.

The protein resides in the cytoplasm. The catalysed reaction is GTP + H2O = GDP + phosphate + H(+). GTP hydrolase that promotes the GTP-dependent binding of aminoacyl-tRNA to the A-site of ribosomes during protein biosynthesis. The protein is Elongation factor Tu of Helicobacter hepaticus (strain ATCC 51449 / 3B1).